A 146-amino-acid polypeptide reads, in one-letter code: UPF0742 protein C1348.03 (146 aa).

A helical membrane pass occupies residues 38 to 60 (LTVKYCLAVKLLIYLLYCWYIYS).

It belongs to the UPF0742 family.

It is found in the cytoplasm. It localises to the nucleus membrane. This Schizosaccharomyces pombe (strain 972 / ATCC 24843) (Fission yeast) protein is UPF0742 protein C1348.03.